Consider the following 167-residue polypeptide: Small ribosomal subunit protein uS5 (167 aa).

Positions 11–74 constitute an S5 DRBM domain; that stretch reads LQEKLIAVNR…EKARRNMINV (64 aa).

Belongs to the universal ribosomal protein uS5 family. Part of the 30S ribosomal subunit. Contacts proteins S4 and S8.

In terms of biological role, with S4 and S12 plays an important role in translational accuracy. Located at the back of the 30S subunit body where it stabilizes the conformation of the head with respect to the body. The sequence is that of Small ribosomal subunit protein uS5 from Escherichia coli O139:H28 (strain E24377A / ETEC).